Reading from the N-terminus, the 551-residue chain is E-selectin (551 aa).

The first 23 residues, 1-23, serve as a signal peptide directing secretion; it reads MVASWLLSTLTFALVLLIKETST. A C-type lectin domain is found at 24–141; sequence WTYHFSAENM…CSKKKLALCY (118 aa). Topologically, residues 24–495 are extracellular; sequence WTYHFSAENM…CEEPIASNVP (472 aa). N-linked (GlcNAc...) asparagine glycosylation is found at asparagine 32 and asparagine 45. 17 disulfides stabilise this stretch: cysteine 42–cysteine 140, cysteine 113–cysteine 132, cysteine 145–cysteine 156, cysteine 150–cysteine 165, cysteine 167–cysteine 176, cysteine 182–cysteine 226, cysteine 195–cysteine 208, cysteine 212–cysteine 239, cysteine 244–cysteine 288, cysteine 257–cysteine 270, cysteine 274–cysteine 301, cysteine 306–cysteine 351, cysteine 337–cysteine 364, cysteine 369–cysteine 414, cysteine 400–cysteine 427, cysteine 432–cysteine 473, and cysteine 459–cysteine 486. Residues glutamate 103, asparagine 105, and glutamate 111 each coordinate Ca(2+). A carbohydrate contacts are provided by residues 103–111, 115–120, and 128–130; these read EPNNKQNNE, EIYIKR, and NDE. Asparagine 128 and aspartate 129 together coordinate Ca(2+). Residues 142–177 form the EGF-like domain; the sequence is TAACTEASCSGHGECIETINNYSCKCYPGFSGLKCE. Residue asparagine 162 is glycosylated (N-linked (GlcNAc...) asparagine). 5 consecutive Sushi domains span residues 180-241, 242-303, 305-366, 368-429, and 430-488; these read VTCE…TCKV, VECD…TCKA, SCDT…VCEA, KCDP…SCQV, and VQCP…TCEE. N-linked (GlcNAc...) asparagine glycosylation is found at asparagine 194, asparagine 201, and asparagine 205. Asparagine 267 is a glycosylation site (N-linked (GlcNAc...) asparagine). Residues asparagine 314, asparagine 321, and asparagine 334 are each glycosylated (N-linked (GlcNAc...) asparagine). 2 N-linked (GlcNAc...) asparagine glycosylation sites follow: asparagine 442 and asparagine 466. A helical membrane pass occupies residues 496 to 517; the sequence is LAVGLSVSGTSFLTLTSFLLWF. At 518–551 the chain is on the cytoplasmic side; it reads LKYFRKKAKKFVPASSRYVGLEAHGNCQVPSHLI.

Belongs to the selectin/LECAM family. As to quaternary structure, interacts with SELPLG/PSGL1 and PODXL2 through the sialyl Lewis X epitope. SELPLG sulfation appears not to be required for this interaction.

It localises to the cell membrane. Its function is as follows. Cell-surface glycoprotein having a role in immunoadhesion. Mediates in the adhesion of blood neutrophils in cytokine-activated endothelium through interaction with SELPLG/PSGL1. May have a role in capillary morphogenesis. The protein is E-selectin (SELE) of Oryctolagus cuniculus (Rabbit).